The primary structure comprises 668 residues: MRYQQWRLMLLRSYHRSHLPYLSPCSQVTSISSRSFSSFIHPGIGALQQSEQLCPLRSPMTSSGNLVKSVGRSFSSEPAVEEKSSAEATVIDIFSRLSGEDEIRKELESSGVVISQDLALKVLRKLESNPDVAKSFFQWIKEASPEELSSKNYNMMLRILGGNGLVDEFWGLVDVMKKKGHGLSANVRDKVGDKFQKDGLESDLLRLRKLFTSDCLDNSAENVCDRVCKIVMKEEWGDDVEKRVRDLNVEFKSDLVKMIVERLDVEPRKALLFFRWIDESDLFKHDEKTYNAMARVLGKEKFLDRFQNIVVEMRSAGYEVEIETYVRVSTRFCQTKLIKEAVDLFEIAMAGSSSSNNPTPHCFCLLLKKIVTAKILDMDLFSRAVKVYTKNGNALTDSLLKSVLKSLRSVDRVEQSNELLKEMKRGGYVPSGDMQSMIASSLSRKGKKDEADEFVDFMESSGNNLDDKAMASLVEGYCDSGNLDEALVCFEKMVGNTGVSYADYSFEKLVLAYCNKNQVRDAYKLLSAQVTKNQLKPRHSTYKSLVTNLLTKKIARDGGFEEALSLLPIMKDHGFPPFIDPFMSYFSSTGKSTEALGFLKAMTSNNFPYISVVLRVFETMMKSARHSEAQDLLSLCPNYIRNNPDVLELFNTMKPNESAVEKPLAASA.

Residues 1–36 constitute a mitochondrion transit peptide; the sequence is MRYQQWRLMLLRSYHRSHLPYLSPCSQVTSISSRSF. PPR repeat units lie at residues 286–320, 321–355, 396–430, 431–465, 466–496, 502–537, and 543–577; these read DEKT…GYEV, EIET…SSSS, TDSL…GYVP, SGDM…GNNL, DDKA…MVGN, ADYS…QLKP, and KSLV…GFPP.

Belongs to the PPR family. P subfamily. In terms of assembly, component of the mitochondrial ribosome small subunit.

The protein localises to the mitochondrion. The protein is Small ribosomal subunit protein mS81 (rPPR8) of Arabidopsis thaliana (Mouse-ear cress).